Consider the following 159-residue polypeptide: 17 kDa surface antigen (159 aa).

The signal sequence occupies residues 1-19; it reads MKLLSKIMIIALATSMLQA. A lipid anchor (N-palmitoyl cysteine) is attached at C20. A lipid anchor (S-diacylglycerol cysteine) is attached at C20.

This sequence belongs to the rickettsiale 17 kDa surface antigen family.

It is found in the cell outer membrane. The protein is 17 kDa surface antigen (omp) of Rickettsia conorii (strain ATCC VR-613 / Malish 7).